The following is a 142-amino-acid chain: Large ribosomal subunit protein uL13 (142 aa).

This sequence belongs to the universal ribosomal protein uL13 family. In terms of assembly, part of the 50S ribosomal subunit.

Functionally, this protein is one of the early assembly proteins of the 50S ribosomal subunit, although it is not seen to bind rRNA by itself. It is important during the early stages of 50S assembly. The polypeptide is Large ribosomal subunit protein uL13 (Geobacter sp. (strain M21)).